We begin with the raw amino-acid sequence, 418 residues long: Glutamyl-tRNA reductase (418 aa).

Residues 49–52, Ser109, 114–116, and Gln120 contribute to the substrate site; these read TCNR and EPQ. The active-site Nucleophile is Cys50. 189–194 is a binding site for NADP(+); that stretch reads GAGETI.

This sequence belongs to the glutamyl-tRNA reductase family. As to quaternary structure, homodimer.

It catalyses the reaction (S)-4-amino-5-oxopentanoate + tRNA(Glu) + NADP(+) = L-glutamyl-tRNA(Glu) + NADPH + H(+). The protein operates within porphyrin-containing compound metabolism; protoporphyrin-IX biosynthesis; 5-aminolevulinate from L-glutamyl-tRNA(Glu): step 1/2. Catalyzes the NADPH-dependent reduction of glutamyl-tRNA(Glu) to glutamate 1-semialdehyde (GSA). The chain is Glutamyl-tRNA reductase from Salmonella heidelberg (strain SL476).